A 131-amino-acid chain; its full sequence is Insulin-like 3 (131 aa).

The signal sequence occupies residues methionine 1–alanine 26. Intrachain disulfides connect cysteine 34/cysteine 116, cysteine 46/cysteine 129, and cysteine 115/cysteine 120. Positions alanine 58–histidine 103 are cleaved as a propeptide — c peptide like.

It belongs to the insulin family. Heterodimer of a B chain and an A chain linked by two disulfide bonds. Expressed exclusively in prenatal and postnatal Leydig cells.

The protein resides in the secreted. Functionally, seems to play a role in testicular function. May be a trophic hormone with a role in testicular descent in fetal life. Is a ligand for LGR8 receptor. The protein is Insulin-like 3 (INSL3) of Sus scrofa (Pig).